The sequence spans 194 residues: Anthranilate synthase component 2 (194 aa).

A Glutamine amidotransferase type-1 domain is found at 2–194; it reads KIFFIDNFDS…QSVGFLEGLL (193 aa). Position 57 to 59 (57 to 59) interacts with L-glutamine; the sequence is GPG. The active-site Nucleophile; for GATase activity is cysteine 84. L-glutamine contacts are provided by residues glutamine 88 and 134–135; that span reads SL. Active-site for GATase activity residues include histidine 170 and glutamate 172.

Heterotetramer consisting of two non-identical subunits: a beta subunit (TrpG) and a large alpha subunit (TrpE).

It catalyses the reaction chorismate + L-glutamine = anthranilate + pyruvate + L-glutamate + H(+). It participates in amino-acid biosynthesis; L-tryptophan biosynthesis; L-tryptophan from chorismate: step 1/5. Part of a heterotetrameric complex that catalyzes the two-step biosynthesis of anthranilate, an intermediate in the biosynthesis of L-tryptophan. In the first step, the glutamine-binding beta subunit (TrpG) of anthranilate synthase (AS) provides the glutamine amidotransferase activity which generates ammonia as a substrate that, along with chorismate, is used in the second step, catalyzed by the large alpha subunit of AS (TrpE) to produce anthranilate. In the absence of TrpG, TrpE can synthesize anthranilate directly from chorismate and high concentrations of ammonia. The protein is Anthranilate synthase component 2 (trpG) of Helicobacter pylori (strain ATCC 700392 / 26695) (Campylobacter pylori).